Consider the following 260-residue polypeptide: Triosephosphate isomerase (260 aa).

11 to 13 (NWK) contacts substrate. Residue histidine 103 is the Electrophile of the active site. The active-site Proton acceptor is the glutamate 175. Substrate is bound by residues glycine 181, serine 220, and 241–242 (GG).

This sequence belongs to the triosephosphate isomerase family. In terms of assembly, homodimer.

The protein resides in the cytoplasm. The enzyme catalyses D-glyceraldehyde 3-phosphate = dihydroxyacetone phosphate. It participates in carbohydrate biosynthesis; gluconeogenesis. The protein operates within carbohydrate degradation; glycolysis; D-glyceraldehyde 3-phosphate from glycerone phosphate: step 1/1. Involved in the gluconeogenesis. Catalyzes stereospecifically the conversion of dihydroxyacetone phosphate (DHAP) to D-glyceraldehyde-3-phosphate (G3P). This is Triosephosphate isomerase from Shewanella sp. (strain MR-4).